Here is a 660-residue protein sequence, read N- to C-terminus: Acetyl-coenzyme A synthetase (660 aa).

Residues 197–200 (RGGK) and Thr-317 each bind CoA. Residues 397-399 (GEP), 421-426 (DTFWQT), Asp-512, and Arg-528 each bind ATP. A CoA-binding site is contributed by Ser-536. Residue Arg-539 coordinates ATP. Positions 550 and 555 each coordinate Mg(2+). Position 625 is an N6-acetyllysine (Lys-625).

It belongs to the ATP-dependent AMP-binding enzyme family. Mg(2+) is required as a cofactor. Acetylated. Deacetylation by the SIR2-homolog deacetylase activates the enzyme.

The enzyme catalyses acetate + ATP + CoA = acetyl-CoA + AMP + diphosphate. Functionally, catalyzes the conversion of acetate into acetyl-CoA (AcCoA), an essential intermediate at the junction of anabolic and catabolic pathways. AcsA undergoes a two-step reaction. In the first half reaction, AcsA combines acetate with ATP to form acetyl-adenylate (AcAMP) intermediate. In the second half reaction, it can then transfer the acetyl group from AcAMP to the sulfhydryl group of CoA, forming the product AcCoA. The protein is Acetyl-coenzyme A synthetase of Cupriavidus taiwanensis (strain DSM 17343 / BCRC 17206 / CCUG 44338 / CIP 107171 / LMG 19424 / R1) (Ralstonia taiwanensis (strain LMG 19424)).